The sequence spans 476 residues: Vitamin D-binding protein (476 aa).

The first 16 residues, Met-1 to Ala-16, serve as a signal peptide directing secretion. Albumin domains lie at Leu-17–Gln-208, Leu-209–Arg-394, and Gln-395–Ser-476. 14 disulfide bridges follow: Cys-29–Cys-75, Cys-74–Cys-83, Cys-96–Cys-112, Cys-111–Cys-122, Cys-145–Cys-190, Cys-189–Cys-198, Cys-220–Cys-266, Cys-265–Cys-273, Cys-286–Cys-300, Cys-299–Cys-311, Cys-335–Cys-376, Cys-375–Cys-384, Cys-407–Cys-453, and Cys-452–Cys-462. A glycan (N-linked (GlcNAc...) asparagine) is linked at Asn-288. A Phosphoserine modification is found at Ser-434.

The protein belongs to the ALB/AFP/VDB family. Associates with membrane-bound immunoglobulin on the surface of B-lymphocytes and with IgG Fc receptor on the membranes of T-lymphocytes. Interacts with LRP2; the interaction is required for renal uptake of GC in complex with 25-hydroxyvitamin D3.

It is found in the secreted. Its function is as follows. Involved in vitamin D transport and storage, scavenging of extracellular G-actin, enhancement of the chemotactic activity of C5 alpha for neutrophils in inflammation and macrophage activation. In Rattus norvegicus (Rat), this protein is Vitamin D-binding protein (Gc).